Reading from the N-terminus, the 244-residue chain is Small ribosomal subunit protein uS3 (244 aa).

The 72-residue stretch at 39 to 110 folds into the KH type-2 domain; it reads IRDYVRKNLS…QIRINVIEVE (72 aa). The segment at 215–244 is disordered; the sequence is EDAAPSNVGQPRRRNQQRRRQQFEDRSNEG. A compositionally biased stretch (basic residues) spans 225–234; the sequence is PRRRNQQRRR. The segment covering 235 to 244 has biased composition (basic and acidic residues); sequence QQFEDRSNEG.

It belongs to the universal ribosomal protein uS3 family. In terms of assembly, part of the 30S ribosomal subunit. Forms a tight complex with proteins S10 and S14.

Its function is as follows. Binds the lower part of the 30S subunit head. Binds mRNA in the 70S ribosome, positioning it for translation. This chain is Small ribosomal subunit protein uS3, found in Synechococcus sp. (strain ATCC 27144 / PCC 6301 / SAUG 1402/1) (Anacystis nidulans).